We begin with the raw amino-acid sequence, 169 residues long: Cytochrome c oxidase subunit 4 isoform 1, mitochondrial (169 aa).

The transit peptide at 1-22 directs the protein to the mitochondrion; it reads MLATRVFSLVGKRAISTSVCVR. Residues 23–98 lie on the Mitochondrial matrix side of the membrane; it reads AHESVVKSED…SFAEMNRGSN (76 aa). Lysine 29 bears the N6-acetyllysine; alternate mark. The residue at position 29 (lysine 29) is an N6-succinyllysine; alternate. Lysine 53 bears the N6-acetyllysine mark. Phosphoserine is present on residues serine 56 and serine 58. Lysine 60 carries the N6-acetyllysine; alternate modification. Lysine 60 bears the N6-succinyllysine; alternate mark. Lysine 67 is modified (N6-acetyllysine). The helical transmembrane segment at 99–124 threads the bilayer; that stretch reads EWKTVVGGAMFFIGFTALVIMWQKHY. Residues 125 to 169 are Mitochondrial intermembrane-facing; sequence VYGPLPQSFDKEWVAKQTKRMLDMKVNPIQGLASKWDYEKNEWKK.

The protein belongs to the cytochrome c oxidase IV family. Component of the cytochrome c oxidase (complex IV, CIV), a multisubunit enzyme composed of 14 subunits. The complex is composed of a catalytic core of 3 subunits MT-CO1, MT-CO2 and MT-CO3, encoded in the mitochondrial DNA, and 11 supernumerary subunits COX4I1 (or COX4I2), COX5A, COX5B, COX6A1 (or COX6A2), COX6B1 (or COX6B2), COX6C, COX7A2 (or COX7A1), COX7B, COX7C, COX8A and NDUFA4, which are encoded in the nuclear genome. The complex exists as a monomer or a dimer and forms supercomplexes (SCs) in the inner mitochondrial membrane with NADH-ubiquinone oxidoreductase (complex I, CI) and ubiquinol-cytochrome c oxidoreductase (cytochrome b-c1 complex, complex III, CIII), resulting in different assemblies (supercomplex SCI(1)III(2)IV(1) and megacomplex MCI(2)III(2)IV(2)). Interacts with AFG1L. Interacts with PHB2; the interaction decreases in absence of SPHK2. Interacts with ABCB7; this interaction allows the regulation of cellular iron homeostasis and cellular reactive oxygen species (ROS) levels in cardiomyocytes. Interacts with FLVCR2; this interaction occurs in the absence of heme and is disrupted upon heme binding. Interacts with IRGC. Ubiquitous.

Its subcellular location is the mitochondrion inner membrane. The protein operates within energy metabolism; oxidative phosphorylation. In terms of biological role, component of the cytochrome c oxidase, the last enzyme in the mitochondrial electron transport chain which drives oxidative phosphorylation. The respiratory chain contains 3 multisubunit complexes succinate dehydrogenase (complex II, CII), ubiquinol-cytochrome c oxidoreductase (cytochrome b-c1 complex, complex III, CIII) and cytochrome c oxidase (complex IV, CIV), that cooperate to transfer electrons derived from NADH and succinate to molecular oxygen, creating an electrochemical gradient over the inner membrane that drives transmembrane transport and the ATP synthase. Cytochrome c oxidase is the component of the respiratory chain that catalyzes the reduction of oxygen to water. Electrons originating from reduced cytochrome c in the intermembrane space (IMS) are transferred via the dinuclear copper A center (CU(A)) of subunit 2 and heme A of subunit 1 to the active site in subunit 1, a binuclear center (BNC) formed by heme A3 and copper B (CU(B)). The BNC reduces molecular oxygen to 2 water molecules using 4 electrons from cytochrome c in the IMS and 4 protons from the mitochondrial matrix. This chain is Cytochrome c oxidase subunit 4 isoform 1, mitochondrial, found in Homo sapiens (Human).